A 29-amino-acid polypeptide reads, in one-letter code: Cyclotide mech-3 (29 aa).

The cyclopeptide (Gly-Asn) cross-link spans 1–29; the sequence is GLPTCGETCTLGKCNTPKCTCNWPICYKN. 3 disulfides stabilise this stretch: cysteine 5/cysteine 19, cysteine 9/cysteine 21, and cysteine 14/cysteine 26.

In terms of processing, this is a cyclic peptide. Contains 3 disulfide bonds.

Functionally, probably participates in a plant defense mechanism (Potential). Binds to and induces leakage in phospholipd membranes, particularly ones containing 1-palmitoyl-2-oleophosphatidylethanolamine (POPE). In vitro, displays cytotoxicity against cultured cells but no hemolytic activity towards fresh erythrocytes. This is Cyclotide mech-3 from Melicytus chathamicus (Chatham Island mahoe).